Consider the following 96-residue polypeptide: Protein Vpr (96 aa).

A homooligomerization region spans residues 1 to 42; the sequence is MEQAPEDQGPQREPYNQWALELLEELKNEAVRHFPRIWLHGL. S79, S94, and S96 each carry phosphoserine; by host.

This sequence belongs to the HIV-1 VPR protein family. As to quaternary structure, homooligomer, may form homodimer. Interacts with p6-gag region of the Pr55 Gag precursor protein through a (Leu-X-X)4 motif near the C-terminus of the P6gag protein. Interacts with host UNG. May interact with host RAD23A/HHR23A. Interacts with host VPRBP/DCAF1, leading to hijack the CUL4A-RBX1-DDB1-DCAF1/VPRBP complex, mediating ubiquitination of host proteins such as TERT and ZGPAT and arrest of the cell cycle in G2 phase. In terms of processing, phosphorylated on several residues by host. These phosphorylations regulate VPR activity for the nuclear import of the HIV-1 pre-integration complex.

The protein localises to the virion. It localises to the host nucleus. It is found in the host extracellular space. During virus replication, may deplete host UNG protein, and incude G2-M cell cycle arrest. Acts by targeting specific host proteins for degradation by the 26S proteasome, through association with the cellular CUL4A-DDB1 E3 ligase complex by direct interaction with host VPRPB/DCAF-1. Cell cycle arrest reportedly occurs within hours of infection and is not blocked by antiviral agents, suggesting that it is initiated by the VPR carried into the virion. Additionally, VPR induces apoptosis in a cell cycle dependent manner suggesting that these two effects are mechanistically linked. Detected in the serum and cerebrospinal fluid of AIDS patient, VPR may also induce cell death to bystander cells. Functionally, during virus entry, plays a role in the transport of the viral pre-integration (PIC) complex to the host nucleus. This function is crucial for viral infection of non-dividing macrophages. May act directly at the nuclear pore complex, by binding nucleoporins phenylalanine-glycine (FG)-repeat regions. The polypeptide is Protein Vpr (Human immunodeficiency virus type 1 group M subtype B (isolate MN) (HIV-1)).